Reading from the N-terminus, the 507-residue chain is ATP synthase subunit alpha, chloroplastic (507 aa).

170 to 177 (GDRQTGKT) is a binding site for ATP.

This sequence belongs to the ATPase alpha/beta chains family. In terms of assembly, F-type ATPases have 2 components, CF(1) - the catalytic core - and CF(0) - the membrane proton channel. CF(1) has five subunits: alpha(3), beta(3), gamma(1), delta(1), epsilon(1). CF(0) has four main subunits: a, b, b' and c.

Its subcellular location is the plastid. It localises to the chloroplast thylakoid membrane. It catalyses the reaction ATP + H2O + 4 H(+)(in) = ADP + phosphate + 5 H(+)(out). Produces ATP from ADP in the presence of a proton gradient across the membrane. The alpha chain is a regulatory subunit. The polypeptide is ATP synthase subunit alpha, chloroplastic (Panax ginseng (Korean ginseng)).